The chain runs to 212 residues: Thymidylate kinase (212 aa).

10–17 is an ATP binding site; the sequence is GIDGCGKT.

Belongs to the thymidylate kinase family.

The catalysed reaction is dTMP + ATP = dTDP + ADP. Phosphorylation of dTMP to form dTDP in both de novo and salvage pathways of dTTP synthesis. The protein is Thymidylate kinase of Prochlorococcus marinus (strain AS9601).